The primary structure comprises 284 residues: tRNA pseudouridine synthase A (284 aa).

Aspartate 52 serves as the catalytic Nucleophile. A substrate-binding site is contributed by tyrosine 149.

Belongs to the tRNA pseudouridine synthase TruA family. As to quaternary structure, homodimer.

The enzyme catalyses uridine(38/39/40) in tRNA = pseudouridine(38/39/40) in tRNA. Formation of pseudouridine at positions 38, 39 and 40 in the anticodon stem and loop of transfer RNAs. The protein is tRNA pseudouridine synthase A of Orientia tsutsugamushi (strain Boryong) (Rickettsia tsutsugamushi).